A 204-amino-acid chain; its full sequence is High frequency lysogenization protein HflD homolog (204 aa).

This sequence belongs to the HflD family.

Its subcellular location is the cytoplasm. It is found in the cell inner membrane. This is High frequency lysogenization protein HflD homolog from Xylella fastidiosa (strain M23).